Consider the following 104-residue polypeptide: NADH-quinone oxidoreductase subunit K (104 aa).

3 consecutive transmembrane segments (helical) span residues 4-24 (VPAS…LFGA), 31-51 (VIVL…LVAF), and 67-87 (LFTM…LIAL).

The protein belongs to the complex I subunit 4L family. As to quaternary structure, NDH-1 is composed of 14 different subunits. Subunits NuoA, H, J, K, L, M, N constitute the membrane sector of the complex.

The protein resides in the cell membrane. The enzyme catalyses a quinone + NADH + 5 H(+)(in) = a quinol + NAD(+) + 4 H(+)(out). NDH-1 shuttles electrons from NADH, via FMN and iron-sulfur (Fe-S) centers, to quinones in the respiratory chain. The immediate electron acceptor for the enzyme in this species is believed to be a menaquinone. Couples the redox reaction to proton translocation (for every two electrons transferred, four hydrogen ions are translocated across the cytoplasmic membrane), and thus conserves the redox energy in a proton gradient. The sequence is that of NADH-quinone oxidoreductase subunit K from Bacillus mycoides (strain KBAB4) (Bacillus weihenstephanensis).